The sequence spans 343 residues: Methionine import ATP-binding protein MetN 1 (343 aa).

Positions 2 to 241 (IKLSNITKVF…PKTPLAQKFI (240 aa)) constitute an ABC transporter domain. 38–45 (GASGAGKS) contributes to the ATP binding site.

This sequence belongs to the ABC transporter superfamily. Methionine importer (TC 3.A.1.24) family. The complex is composed of two ATP-binding proteins (MetN), two transmembrane proteins (MetI) and a solute-binding protein (MetQ).

It localises to the cell inner membrane. The catalysed reaction is L-methionine(out) + ATP + H2O = L-methionine(in) + ADP + phosphate + H(+). It catalyses the reaction D-methionine(out) + ATP + H2O = D-methionine(in) + ADP + phosphate + H(+). Its function is as follows. Part of the ABC transporter complex MetNIQ involved in methionine import. Responsible for energy coupling to the transport system. The polypeptide is Methionine import ATP-binding protein MetN 1 (Salmonella paratyphi A (strain ATCC 9150 / SARB42)).